We begin with the raw amino-acid sequence, 685 residues long: Dammaradiene synthase (685 aa).

PFTB repeat units follow at residues 82–123 (MDKM…RLLN) and 265–308 (IREA…DPVV). Aspartate 400 (proton donor) is an active-site residue. PFTB repeat units lie at residues 424-465 (ITRC…KAMV) and 621-672 (IGHG…ARYR).

This sequence belongs to the terpene cyclase/mutase family.

The catalysed reaction is squalene = dammara-20,24-diene. Functionally, squalene cyclase producing the tetracyclic triterpene dammaradiene. The sequence is that of Dammaradiene synthase (DCD) from Dryopteris crassirhizoma (Thick stemmed wood fern).